We begin with the raw amino-acid sequence, 196 residues long: ATP-dependent Clp protease proteolytic subunit (196 aa).

The Nucleophile role is filled by Ser-99. The active site involves His-124.

The protein belongs to the peptidase S14 family. As to quaternary structure, fourteen ClpP subunits assemble into 2 heptameric rings which stack back to back to give a disk-like structure with a central cavity, resembling the structure of eukaryotic proteasomes.

It is found in the cytoplasm. The enzyme catalyses Hydrolysis of proteins to small peptides in the presence of ATP and magnesium. alpha-casein is the usual test substrate. In the absence of ATP, only oligopeptides shorter than five residues are hydrolyzed (such as succinyl-Leu-Tyr-|-NHMec, and Leu-Tyr-Leu-|-Tyr-Trp, in which cleavage of the -Tyr-|-Leu- and -Tyr-|-Trp bonds also occurs).. Functionally, cleaves peptides in various proteins in a process that requires ATP hydrolysis. Has a chymotrypsin-like activity. Plays a major role in the degradation of misfolded proteins. This chain is ATP-dependent Clp protease proteolytic subunit, found in Helicobacter pylori (strain ATCC 700392 / 26695) (Campylobacter pylori).